The following is a 193-amino-acid chain: Xanthine phosphoribosyltransferase (193 aa).

Xanthine-binding residues include Leu-20 and Asn-27. Residue 129 to 133 (ANGKA) participates in 5-phospho-alpha-D-ribose 1-diphosphate binding. Lys-157 contributes to the xanthine binding site.

This sequence belongs to the purine/pyrimidine phosphoribosyltransferase family. Xpt subfamily. In terms of assembly, homodimer.

It localises to the cytoplasm. It carries out the reaction XMP + diphosphate = xanthine + 5-phospho-alpha-D-ribose 1-diphosphate. It participates in purine metabolism; XMP biosynthesis via salvage pathway; XMP from xanthine: step 1/1. Converts the preformed base xanthine, a product of nucleic acid breakdown, to xanthosine 5'-monophosphate (XMP), so it can be reused for RNA or DNA synthesis. In Bifidobacterium adolescentis (strain ATCC 15703 / DSM 20083 / NCTC 11814 / E194a), this protein is Xanthine phosphoribosyltransferase.